Here is a 628-residue protein sequence, read N- to C-terminus: Chaperone protein DnaK (628 aa).

The residue at position 174 (T174) is a Phosphothreonine; by autocatalysis. The tract at residues 589 to 628 is disordered; that stretch reads AAGGAGPDMGAGAGPDMGAGASNGSAPYGDDVVDGDYKEV. Positions 591–605 are enriched in gly residues; the sequence is GGAGPDMGAGAGPDM.

This sequence belongs to the heat shock protein 70 family.

Its function is as follows. Acts as a chaperone. The protein is Chaperone protein DnaK of Lachnospira eligens (strain ATCC 27750 / DSM 3376 / VPI C15-48 / C15-B4) (Eubacterium eligens).